We begin with the raw amino-acid sequence, 249 residues long: tRNA pseudouridine synthase A (249 aa).

Asp53 acts as the Nucleophile in catalysis. Tyr111 serves as a coordination point for substrate.

It belongs to the tRNA pseudouridine synthase TruA family. Homodimer.

The catalysed reaction is uridine(38/39/40) in tRNA = pseudouridine(38/39/40) in tRNA. Formation of pseudouridine at positions 38, 39 and 40 in the anticodon stem and loop of transfer RNAs. The chain is tRNA pseudouridine synthase A from Streptococcus pyogenes serotype M1.